The sequence spans 57 residues: Large ribosomal subunit protein bL32 (57 aa).

The protein belongs to the bacterial ribosomal protein bL32 family.

This is Large ribosomal subunit protein bL32 from Geobacillus sp. (strain WCH70).